Here is a 204-residue protein sequence, read N- to C-terminus: Thymidylate kinase (204 aa).

An ATP-binding site is contributed by 12 to 19 (GVDGAGKS).

It belongs to the thymidylate kinase family.

It catalyses the reaction dTMP + ATP = dTDP + ADP. In terms of biological role, phosphorylation of dTMP to form dTDP in both de novo and salvage pathways of dTTP synthesis. This Thiobacillus denitrificans (strain ATCC 25259 / T1) protein is Thymidylate kinase.